Reading from the N-terminus, the 207-residue chain is Phosphoserine phosphatase (207 aa).

The active-site Nucleophile is Asp-8. 2 residues coordinate Mg(2+): Asp-8 and Asp-10. Asp-10 acts as the Proton donor in catalysis. Substrate contacts are provided by residues Glu-17, Arg-53, 96-97, and Lys-141; that span reads SG. Asp-164 lines the Mg(2+) pocket. Asn-167 provides a ligand contact to substrate.

This sequence belongs to the HAD-like hydrolase superfamily. SerB family. It depends on Mg(2+) as a cofactor.

The enzyme catalyses O-phospho-L-serine + H2O = L-serine + phosphate. It catalyses the reaction O-phospho-D-serine + H2O = D-serine + phosphate. Its pathway is amino-acid biosynthesis; L-serine biosynthesis; L-serine from 3-phospho-D-glycerate: step 3/3. The polypeptide is Phosphoserine phosphatase (Campylobacter jejuni subsp. doylei (strain ATCC BAA-1458 / RM4099 / 269.97)).